A 220-amino-acid chain; its full sequence is Sugar transporter SWEET1 (220 aa).

The next 7 membrane-spanning stretches (helical) occupy residues 9 to 29 (LMTF…IMPL), 44 to 64 (VAGL…SYAL), 70 to 90 (TMLF…FNYW), 106 to 126 (VMIA…NTVD), 138 to 158 (LSSV…AIVI), 167 to 187 (IINV…FGLL), and 191 to 211 (IYIY…LTLI). The 81-residue stretch at 12–92 (FIQFCATFIT…IYYVFNYWKN (81 aa)) folds into the MtN3/slv 1 domain. Residues 134–217 (RLGFLSSVVC…LTLIKLYPPQ (84 aa)) enclose the MtN3/slv 2 domain.

Belongs to the SWEET sugar transporter family.

The protein localises to the golgi apparatus membrane. Its subcellular location is the cell membrane. In terms of biological role, mediates both low-affinity uptake and efflux of sugar across the membrane. The chain is Sugar transporter SWEET1 (slc50a1) from Dictyostelium discoideum (Social amoeba).